A 973-amino-acid chain; its full sequence is E3 ubiquitin-protein ligase MIB2 (973 aa).

One can recognise an MIB/HERC2 1 domain in the interval 1 to 80; that stretch reads MDLDPHAGVQ…AHDLLLYDNA (80 aa). The ZZ-type zinc finger occupies 86-138; that stretch reads HPNIICDCCKKHGLRGMRWKCRVCFDYDLCTQCYMHNKHDLTHAFERYETSHS. Residues C91, C94, C106, C109, C115, C118, H124, and H128 each coordinate Zn(2+). Positions 149-227 constitute an MIB/HERC2 2 domain; it reads LPRIPLRGIF…KVDLRCVGEA (79 aa). S251 bears the Phosphoserine mark. ANK repeat units lie at residues 480-509, 513-542, 546-575, 579-611, 615-644, 649-679, 683-712, 716-744, and 785-814; these read QGRTALQVAAYLGQVELVRLLLQARASMDL, EGNTVLHYTAMGNQPEATRVLLSAGCAVDA, TRSTALHVAVQRGFLEVVKILCERGCDVNL, HADTPLHSAISAGAGASSIVEVLTEVPGIDVTA, QGFTLLHHASLKGHVLAVRKILARARQLVD, DGFTALHLAALNNHREVAQVLIREGRCDVNV, KLQSPLHLAVQQAHLGLVPLLVDAGCSVNT, EGDTALHVALQRHQLLPLVADRAGGDPGP, and RGRSPLDLATEGRVLKALQGCAQRFRERQA. RING-type zinc fingers lie at residues 850-885 and 929-962; these read CLVCSELALLILFSPCQHRTVCEECARRMKKCIRCQ and CPICIDSHIRLVFQCGHGACAPCGAALNACPICR.

Interacts with actin monomer. Post-translationally, ubiquitinated. Possibly via autoubiquitination. As to expression, highly expressed in brain, heart, liver and kidney.

The protein localises to the cytoplasm. It localises to the endosome. It catalyses the reaction S-ubiquitinyl-[E2 ubiquitin-conjugating enzyme]-L-cysteine + [acceptor protein]-L-lysine = [E2 ubiquitin-conjugating enzyme]-L-cysteine + N(6)-ubiquitinyl-[acceptor protein]-L-lysine.. It participates in protein modification; protein ubiquitination. Functionally, E3 ubiquitin-protein ligase that mediates ubiquitination of Delta receptors, which act as ligands of Notch proteins. Positively regulates the Delta-mediated Notch signaling by ubiquitinating the intracellular domain of Delta, leading to endocytosis of Delta receptors. This chain is E3 ubiquitin-protein ligase MIB2 (Mib2), found in Mus musculus (Mouse).